We begin with the raw amino-acid sequence, 334 residues long: 6-phosphogluconolactonase (334 aa).

It belongs to the cycloisomerase 2 family.

It catalyses the reaction 6-phospho-D-glucono-1,5-lactone + H2O = 6-phospho-D-gluconate + H(+). Its pathway is carbohydrate degradation; pentose phosphate pathway; D-ribulose 5-phosphate from D-glucose 6-phosphate (oxidative stage): step 2/3. Its function is as follows. Catalyzes the hydrolysis of 6-phosphogluconolactone to 6-phosphogluconate. This is 6-phosphogluconolactonase from Yersinia pseudotuberculosis serotype O:1b (strain IP 31758).